A 296-amino-acid chain; its full sequence is Glycine--tRNA ligase alpha subunit (296 aa).

Belongs to the class-II aminoacyl-tRNA synthetase family. In terms of assembly, tetramer of two alpha and two beta subunits.

The protein resides in the cytoplasm. It carries out the reaction tRNA(Gly) + glycine + ATP = glycyl-tRNA(Gly) + AMP + diphosphate. The sequence is that of Glycine--tRNA ligase alpha subunit from Listeria monocytogenes serotype 4a (strain HCC23).